A 311-amino-acid chain; its full sequence is Sulfate adenylyltransferase subunit 2 (311 aa).

Belongs to the PAPS reductase family. CysD subfamily. Heterodimer composed of CysD, the smaller subunit, and CysN.

The catalysed reaction is sulfate + ATP + H(+) = adenosine 5'-phosphosulfate + diphosphate. It functions in the pathway sulfur metabolism; hydrogen sulfide biosynthesis; sulfite from sulfate: step 1/3. Functionally, with CysN forms the ATP sulfurylase (ATPS) that catalyzes the adenylation of sulfate producing adenosine 5'-phosphosulfate (APS) and diphosphate, the first enzymatic step in sulfur assimilation pathway. APS synthesis involves the formation of a high-energy phosphoric-sulfuric acid anhydride bond driven by GTP hydrolysis by CysN coupled to ATP hydrolysis by CysD. The polypeptide is Sulfate adenylyltransferase subunit 2 (Caulobacter vibrioides (strain ATCC 19089 / CIP 103742 / CB 15) (Caulobacter crescentus)).